The sequence spans 467 residues: Siroheme synthase (467 aa).

Residues 1–203 (METLPIFMKL…GQEEAARHAM (203 aa)) are precorrin-2 dehydrogenase /sirohydrochlorin ferrochelatase. NAD(+) contacts are provided by residues 22-23 (EI) and 43-44 (PE). Residue S128 is modified to Phosphoserine. Residues 216–467 (GEVYLVGGGP…APSPEVVSAG (252 aa)) are uroporphyrinogen-III C-methyltransferase. P225 serves as a coordination point for S-adenosyl-L-methionine. The Proton acceptor role is filled by D248. The active-site Proton donor is the K270. S-adenosyl-L-methionine is bound by residues 301 to 303 (GGD), I306, 331 to 332 (TA), M383, and G412.

The protein in the N-terminal section; belongs to the precorrin-2 dehydrogenase / sirohydrochlorin ferrochelatase family. In the C-terminal section; belongs to the precorrin methyltransferase family.

The catalysed reaction is uroporphyrinogen III + 2 S-adenosyl-L-methionine = precorrin-2 + 2 S-adenosyl-L-homocysteine + H(+). The enzyme catalyses precorrin-2 + NAD(+) = sirohydrochlorin + NADH + 2 H(+). It catalyses the reaction siroheme + 2 H(+) = sirohydrochlorin + Fe(2+). Its pathway is cofactor biosynthesis; adenosylcobalamin biosynthesis; precorrin-2 from uroporphyrinogen III: step 1/1. It participates in cofactor biosynthesis; adenosylcobalamin biosynthesis; sirohydrochlorin from precorrin-2: step 1/1. It functions in the pathway porphyrin-containing compound metabolism; siroheme biosynthesis; precorrin-2 from uroporphyrinogen III: step 1/1. The protein operates within porphyrin-containing compound metabolism; siroheme biosynthesis; siroheme from sirohydrochlorin: step 1/1. Its pathway is porphyrin-containing compound metabolism; siroheme biosynthesis; sirohydrochlorin from precorrin-2: step 1/1. In terms of biological role, multifunctional enzyme that catalyzes the SAM-dependent methylations of uroporphyrinogen III at position C-2 and C-7 to form precorrin-2 via precorrin-1. Then it catalyzes the NAD-dependent ring dehydrogenation of precorrin-2 to yield sirohydrochlorin. Finally, it catalyzes the ferrochelation of sirohydrochlorin to yield siroheme. This Methylobacillus flagellatus (strain ATCC 51484 / DSM 6875 / VKM B-1610 / KT) protein is Siroheme synthase.